We begin with the raw amino-acid sequence, 497 residues long: ATP synthase subunit alpha 2 (497 aa).

Residue 167 to 174 participates in ATP binding; the sequence is GERATGKT.

Belongs to the ATPase alpha/beta chains family. F-type ATPases have 2 components, CF(1) - the catalytic core - and CF(0) - the membrane proton channel. CF(1) has five subunits: alpha(3), beta(3), gamma(1), delta(1), epsilon(1). CF(0) has four main subunits: a(1), b(1), b'(1) and c(9-12).

The protein resides in the cell inner membrane. The catalysed reaction is ATP + H2O + 4 H(+)(in) = ADP + phosphate + 5 H(+)(out). Produces ATP from ADP in the presence of a proton gradient across the membrane. The alpha chain is a regulatory subunit. The chain is ATP synthase subunit alpha 2 from Cereibacter sphaeroides (strain ATCC 17023 / DSM 158 / JCM 6121 / CCUG 31486 / LMG 2827 / NBRC 12203 / NCIMB 8253 / ATH 2.4.1.) (Rhodobacter sphaeroides).